A 249-amino-acid chain; its full sequence is ATP synthase subunit a, chloroplastic (249 aa).

Transmembrane regions (helical) follow at residues 40–60, 97–117, 136–156, 201–221, and 222–242; these read QVLI…VLAI, VPFI…GALL, INTT…AGLS, LVVV…VMFL, and GLFT…AYIG.

It belongs to the ATPase A chain family. As to quaternary structure, F-type ATPases have 2 components, CF(1) - the catalytic core - and CF(0) - the membrane proton channel. CF(1) has five subunits: alpha(3), beta(3), gamma(1), delta(1), epsilon(1). CF(0) has four main subunits: a, b, b' and c.

Its subcellular location is the plastid. The protein resides in the chloroplast thylakoid membrane. In terms of biological role, key component of the proton channel; it plays a direct role in the translocation of protons across the membrane. This chain is ATP synthase subunit a, chloroplastic, found in Olimarabidopsis pumila (Dwarf rocket).